Reading from the N-terminus, the 230-residue chain is Ribonuclease 3 (230 aa).

Positions 8–135 (IVELKEKLGI…LIGAVYLQTN (128 aa)) constitute an RNase III domain. Residue E48 participates in Mg(2+) binding. D52 is an active-site residue. Mg(2+) is bound by residues D121 and E124. Residue E124 is part of the active site. Residues 161-230 (DYKTMIQELV…AHFAFQKLSK (70 aa)) form the DRBM domain.

Belongs to the ribonuclease III family. As to quaternary structure, homodimer. It depends on Mg(2+) as a cofactor.

The protein resides in the cytoplasm. The enzyme catalyses Endonucleolytic cleavage to 5'-phosphomonoester.. Its function is as follows. Digests double-stranded RNA. Involved in the processing of primary rRNA transcript to yield the immediate precursors to the large and small rRNAs (23S and 16S). Processes some mRNAs, and tRNAs when they are encoded in the rRNA operon. Processes pre-crRNA and tracrRNA of type II CRISPR loci if present in the organism. This Natranaerobius thermophilus (strain ATCC BAA-1301 / DSM 18059 / JW/NM-WN-LF) protein is Ribonuclease 3.